A 468-amino-acid chain; its full sequence is ATP synthase subunit beta (468 aa).

150–157 is a binding site for ATP; that stretch reads GGAGVGKT.

This sequence belongs to the ATPase alpha/beta chains family. In terms of assembly, F-type ATPases have 2 components, CF(1) - the catalytic core - and CF(0) - the membrane proton channel. CF(1) has five subunits: alpha(3), beta(3), gamma(1), delta(1), epsilon(1). CF(0) has three main subunits: a(1), b(2) and c(9-12). The alpha and beta chains form an alternating ring which encloses part of the gamma chain. CF(1) is attached to CF(0) by a central stalk formed by the gamma and epsilon chains, while a peripheral stalk is formed by the delta and b chains.

It is found in the cell inner membrane. It catalyses the reaction ATP + H2O + 4 H(+)(in) = ADP + phosphate + 5 H(+)(out). In terms of biological role, produces ATP from ADP in the presence of a proton gradient across the membrane. The catalytic sites are hosted primarily by the beta subunits. This is ATP synthase subunit beta from Acidovorax ebreus (strain TPSY) (Diaphorobacter sp. (strain TPSY)).